The chain runs to 203 residues: Molybdenum cofactor guanylyltransferase (203 aa).

Residues 12–14 (LAG), lysine 25, asparagine 53, aspartate 71, and aspartate 101 contribute to the GTP site. Aspartate 101 serves as a coordination point for Mg(2+).

Belongs to the MobA family. Monomer. Mg(2+) is required as a cofactor.

It is found in the cytoplasm. It carries out the reaction Mo-molybdopterin + GTP + H(+) = Mo-molybdopterin guanine dinucleotide + diphosphate. Functionally, transfers a GMP moiety from GTP to Mo-molybdopterin (Mo-MPT) cofactor (Moco or molybdenum cofactor) to form Mo-molybdopterin guanine dinucleotide (Mo-MGD) cofactor. This chain is Molybdenum cofactor guanylyltransferase, found in Methylibium petroleiphilum (strain ATCC BAA-1232 / LMG 22953 / PM1).